Reading from the N-terminus, the 417-residue chain is Spermidine/putrescine import ATP-binding protein PotA (417 aa).

Positions 5 to 308 (IILKDLTKVF…PANRFVAQFV (304 aa)) constitute an ABC transporter domain. ATP is bound at residue 37–44 (GPSGCGKT). Positions 105 to 177 (DFNSKIKDNL…TALKCKKINK (73 aa)) are insert.

It belongs to the ABC transporter superfamily. Spermidine/putrescine importer (TC 3.A.1.11.1) family. The complex is composed of two ATP-binding proteins (PotA), two transmembrane proteins (PotB and PotC) and a solute-binding protein (PotD).

It is found in the cell membrane. It catalyses the reaction ATP + H2O + polyamine-[polyamine-binding protein]Side 1 = ADP + phosphate + polyamineSide 2 + [polyamine-binding protein]Side 1.. Its function is as follows. Part of the ABC transporter complex PotABCD involved in spermidine/putrescine import. Responsible for energy coupling to the transport system. The polypeptide is Spermidine/putrescine import ATP-binding protein PotA (Aster yellows witches'-broom phytoplasma (strain AYWB)).